We begin with the raw amino-acid sequence, 141 residues long: MRQRTIVCPLIQNDGAYLLCKMADDRGVFPGQWALSGGGVESGERIEEALRREIREELGEQLLLTEITPWTFSDDIRTKTYADGRKEEIYMIYLIFDCVSANREVKINEEFQDYAWVKPEDLVHYDLNVATRKTLRLKGLL.

The 141-residue stretch at 1-141 (MRQRTIVCPL…RKTLRLKGLL (141 aa)) folds into the Nudix hydrolase domain. The Nudix box signature appears at 38 to 59 (GGVESGERIEEALRREIREELG).

Belongs to the Nudix hydrolase family. NudI subfamily. As to quaternary structure, monomer. Mg(2+) serves as cofactor.

The enzyme catalyses a ribonucleoside 5'-triphosphate + H2O = a ribonucleoside 5'-phosphate + diphosphate + H(+). The catalysed reaction is a 2'-deoxyribonucleoside 5'-triphosphate + H2O = a 2'-deoxyribonucleoside 5'-phosphate + diphosphate + H(+). It catalyses the reaction dUTP + H2O = dUMP + diphosphate + H(+). It carries out the reaction dTTP + H2O = dTMP + diphosphate + H(+). The enzyme catalyses dCTP + H2O = dCMP + diphosphate + H(+). Its function is as follows. Catalyzes the hydrolysis of nucleoside triphosphates, with a preference for pyrimidine deoxynucleoside triphosphates (dUTP, dTTP and dCTP). The sequence is that of Nucleoside triphosphatase NudI from Shigella flexneri serotype 5b (strain 8401).